The primary structure comprises 335 residues: MMGINSVYSKPISEIEFASAMNSVKNRFGVDENEWYIYLESEDYIYDQRLIEKGMEPKHSDTHRKFPKIIKNGQIDIDNIGDDFMLPDPIALIKEWQSSPNSWEKKVVSVMKTLGDFKNVIKILDIGSSNDCINPVSSGLTRPLEGREKIVSDIVQNLISRMSTIDTTDKNKSRQYQQEINTIVATYNSFHPVWSFVKLSKLNYWSKEIEVPFIRKGNRAINDINVNLRPSEDLKVSPTDKQFSQGYIPYLINKMVLGDIPNEIAAIVFNNTIVIDGLNLSEGQRLRAVLLSGNSRDSFDNRCIFKCKHFLENFFRENTIKEYNYTRYVKISIPK.

This is an uncharacterized protein from Acanthamoeba polyphaga mimivirus (APMV).